We begin with the raw amino-acid sequence, 487 residues long: WD repeat, SAM and U-box domain-containing protein 1 (487 aa).

WD repeat units lie at residues 10-47 (SHRDDVNCVAFSGDLLATCSADKSICVYSSRDFSELPF), 52-93 (GHGY…AVLE), 95-134 (PGRSPVRVCAFSPDSSHLVSGGSDGSIALWDFTSRTLRRT), 137-176 (VNDTSIVACSFTPCGQMFITGSTYGDLRLWDLNMNHLHAE), 179-227 (AHDL…SAGI), 237-276 (GQSAPVLSCAYSPDGQMLVSGSVDKTVTVYQADEGVLLYT), and 279-318 (QHDRYVTACAFSPTAPLIATGSMDKSVNIWRMEEGSSAQG). Residues 347 to 411 (WSEEEVLAWL…MKKIEELKMV (65 aa)) enclose the SAM domain. The U-box domain maps to 416 to 487 (GTPDEFLCPI…MAIFRWSTSQ (72 aa)).

This chain is WD repeat, SAM and U-box domain-containing protein 1 (wdsub1), found in Danio rerio (Zebrafish).